Reading from the N-terminus, the 812-residue chain is ISWI one complex protein 2 (812 aa).

Disordered stretches follow at residues 1-21 (MRTK…AGAA), 614-646 (MGNS…KRKP), 679-704 (AKQR…LEEL), and 762-812 (QTGS…PPTN). A compositionally biased stretch (polar residues) spans 627-638 (PQSTLEPSTKSS). A coiled-coil region spans residues 673 to 714 (ELKIIRAKQRKQQEDRERRKKMKEEKKRLEELAKKRELTESV). A compositionally biased stretch (basic and acidic residues) spans 683–704 (KQQEDRERRKKMKEEKKRLEEL). Residues 769–796 (PQAPQAPQTSQASIQPQQQQQQQQQQQP) show a composition bias toward low complexity.

In terms of assembly, component of the ISW1B complex, which at least consists of ISW1, IOC2 and IOC4.

It is found in the nucleus. In terms of biological role, functions as a component of the ISW1B complex, which acts in remodeling the chromatin by catalyzing an ATP-dependent alteration in the structure of nucleosomal DNA. The ISW1B complex acts within coding regions to control the amount of RNA polymerase II released into productive elongation and to coordinate elongation with termination and pre-mRNA processing. In Saccharomyces cerevisiae (strain ATCC 204508 / S288c) (Baker's yeast), this protein is ISWI one complex protein 2 (IOC2).